A 315-amino-acid chain; its full sequence is 4-diphosphocytidyl-2-C-methyl-D-erythritol kinase (315 aa).

Lysine 10 is a catalytic residue. 107 to 117 (PVAGGMAGGSA) provides a ligand contact to ATP. Aspartate 148 is a catalytic residue. Residues 292 to 315 (HPATSPVPGPAKNRGAHIVSIESE) form a disordered region.

It belongs to the GHMP kinase family. IspE subfamily.

The enzyme catalyses 4-CDP-2-C-methyl-D-erythritol + ATP = 4-CDP-2-C-methyl-D-erythritol 2-phosphate + ADP + H(+). The protein operates within isoprenoid biosynthesis; isopentenyl diphosphate biosynthesis via DXP pathway; isopentenyl diphosphate from 1-deoxy-D-xylulose 5-phosphate: step 3/6. Its function is as follows. Catalyzes the phosphorylation of the position 2 hydroxy group of 4-diphosphocytidyl-2C-methyl-D-erythritol. This chain is 4-diphosphocytidyl-2-C-methyl-D-erythritol kinase, found in Corynebacterium efficiens (strain DSM 44549 / YS-314 / AJ 12310 / JCM 11189 / NBRC 100395).